A 548-amino-acid chain; its full sequence is ATP synthase subunit alpha, mitochondrial (548 aa).

209 to 216 (GDRQTGKT) lines the ATP pocket.

The protein belongs to the ATPase alpha/beta chains family. In terms of assembly, F-type ATPases have 2 components, CF(1) - the catalytic core - and CF(0) - the membrane proton channel. CF(1) has five subunits: alpha(3), beta(3), gamma(1), delta(1), epsilon(1). CF(0) has three main subunits: a, b and c.

It is found in the mitochondrion. Its subcellular location is the mitochondrion inner membrane. Its function is as follows. Mitochondrial membrane ATP synthase (F(1)F(0) ATP synthase or Complex V) produces ATP from ADP in the presence of a proton gradient across the membrane which is generated by electron transport complexes of the respiratory chain. F-type ATPases consist of two structural domains, F(1) - containing the extramembraneous catalytic core, and F(0) - containing the membrane proton channel, linked together by a central stalk and a peripheral stalk. During catalysis, ATP synthesis in the catalytic domain of F(1) is coupled via a rotary mechanism of the central stalk subunits to proton translocation. Subunits alpha and beta form the catalytic core in F(1). Rotation of the central stalk against the surrounding alpha(3)beta(3) subunits leads to hydrolysis of ATP in three separate catalytic sites on the beta subunits. Subunit alpha does not bear the catalytic high-affinity ATP-binding sites. This Kluyveromyces lactis (strain ATCC 8585 / CBS 2359 / DSM 70799 / NBRC 1267 / NRRL Y-1140 / WM37) (Yeast) protein is ATP synthase subunit alpha, mitochondrial (ATP1).